Here is a 261-residue protein sequence, read N- to C-terminus: Syntaxin-7 (261 aa).

Position 2 is an N-acetylserine (S2). Residues S2 to L238 are Cytoplasmic-facing. T4 carries the post-translational modification Phosphothreonine. Phosphoserine is present on S45. The stretch at E47 to Y69 forms a coiled coil. A Phosphoserine modification is found at S75. A Phosphothreonine modification is found at T79. 4 positions are modified to phosphoserine: S125, S126, S129, and S205. Positions S129 to Q148 are disordered. In terms of domain architecture, t-SNARE coiled-coil homology spans L165–A227. The helical; Anchor for type IV membrane protein transmembrane segment at C239–L259 threads the bilayer. Over N260 to H261 the chain is Vesicular.

The protein belongs to the syntaxin family. Forms a SNARE complex with VTI1B, STX8 and VAMP8 which functions in the homotypic fusion of late endosomes. Component of the SNARE complex composed of STX7, STX8, VAMP7 and VTI1B that is required for heterotypic fusion of late endosomes with lysosomes. Interacts with VPS11, VPS16 and VPS18. Interacts with VPS33A. Interacts with TPC1. Highest expression is found in placenta followed by heart, skeletal muscle, kidney and brain. Low expression is found in pancreas, lung and liver.

Its subcellular location is the early endosome membrane. May be involved in protein trafficking from the plasma membrane to the early endosome (EE) as well as in homotypic fusion of endocytic organelles. Mediates the endocytic trafficking from early endosomes to late endosomes and lysosomes. This Homo sapiens (Human) protein is Syntaxin-7 (STX7).